Reading from the N-terminus, the 283-residue chain is Formamidopyrimidine-DNA glycosylase (283 aa).

Catalysis depends on P2, which acts as the Schiff-base intermediate with DNA. The active-site Proton donor is E3. K58 functions as the Proton donor; for beta-elimination activity in the catalytic mechanism. 3 residues coordinate DNA: H100, R119, and R162. The FPG-type zinc finger occupies 247-283; that stretch reads DVYGREGEPCRRAGCTGTVTRITQSGRSSFYCGKCQR. Residue R273 is the Proton donor; for delta-elimination activity of the active site.

Belongs to the FPG family. As to quaternary structure, monomer. The cofactor is Zn(2+).

It carries out the reaction Hydrolysis of DNA containing ring-opened 7-methylguanine residues, releasing 2,6-diamino-4-hydroxy-5-(N-methyl)formamidopyrimidine.. It catalyses the reaction 2'-deoxyribonucleotide-(2'-deoxyribose 5'-phosphate)-2'-deoxyribonucleotide-DNA = a 3'-end 2'-deoxyribonucleotide-(2,3-dehydro-2,3-deoxyribose 5'-phosphate)-DNA + a 5'-end 5'-phospho-2'-deoxyribonucleoside-DNA + H(+). Functionally, involved in base excision repair of DNA damaged by oxidation or by mutagenic agents. Acts as a DNA glycosylase that recognizes and removes damaged bases. Has a preference for oxidized purines, such as 7,8-dihydro-8-oxoguanine (8-oxoG). Has AP (apurinic/apyrimidinic) lyase activity and introduces nicks in the DNA strand. Cleaves the DNA backbone by beta-delta elimination to generate a single-strand break at the site of the removed base with both 3'- and 5'-phosphates. The sequence is that of Formamidopyrimidine-DNA glycosylase from Ruegeria sp. (strain TM1040) (Silicibacter sp.).